Consider the following 497-residue polypeptide: MRRTVRALATRVHGRVCAVPLVVGMLLATALYGGGPAAADPAAPDNLATLVAKVASADQKLQELGAAIQTQQETVNKAIVDVQAARDAAAAAQRELEAGQRGVADANAAIEAAQKRFDSFAAATYMNGPSRSYLTATDPADIVNTTATGQALIASSQQVMAKLQRARTEQVNRESAARLAKEKADQAARDAESSQDNAVAALKQAQQTFNAQQGELERLAAERAAAQAELDSVRKVSATGNAAPAAAPAAAPAPAAAPAPVPNSAPAPVPGAQPNPQAAAGNWDRAPSGPASSGQNWAVWDPTLPAIPSAFVSGDPIAIINAVLGIASTSAQVTADMGRSFLQKLGILPTPTGFTNGAIPRVYGREAVEYVIRRGMSQIGVPYSWGGGNAAGPSRGIDSGAGTVGFDCSGLMLYMFAGVGIKLDHYSGSQYNAGRKIPSSQMRRGDMIFYGPNASQHVAMYLGNGQMLEAPYTGSHVKVSPVRTSGMTPYVTRLIEY.

A signal peptide spans 1–39 (MRRTVRALATRVHGRVCAVPLVVGMLLATALYGGGPAAA). The span at 177–192 (ARLAKEKADQAARDAE) shows a compositional bias: basic and acidic residues. Disordered regions lie at residues 177 to 198 (ARLA…QDNA) and 253 to 297 (APAA…GQNW). The span at 255 to 273 (AAAPAPVPNSAPAPVPGAQ) shows a compositional bias: pro residues. Residues 365-497 (REAVEYVIRR…TPYVTRLIEY (133 aa)) form the NlpC/P60 domain. Cys408 (nucleophile) is an active-site residue. Residue His457 is the Proton acceptor of the active site. Glu469 is an active-site residue.

Belongs to the peptidase C40 family. In terms of assembly, monomer.

It localises to the secreted. Peptidoglycan endopeptidase that cleaves the bond between D-glutamate and meso-diaminopimelate. Binds and degrades high-molecular weight peptidoglycan. Required for normal separation of daughter cells after cell division and for cell wall integrity. This is Peptidoglycan endopeptidase RipA (ripA) from Mycolicibacterium smegmatis (strain ATCC 700084 / mc(2)155) (Mycobacterium smegmatis).